A 208-amino-acid polypeptide reads, in one-letter code: Protein-L-isoaspartate O-methyltransferase (208 aa).

Ser59 is a catalytic residue.

It belongs to the methyltransferase superfamily. L-isoaspartyl/D-aspartyl protein methyltransferase family.

The protein localises to the cytoplasm. The enzyme catalyses [protein]-L-isoaspartate + S-adenosyl-L-methionine = [protein]-L-isoaspartate alpha-methyl ester + S-adenosyl-L-homocysteine. Functionally, catalyzes the methyl esterification of L-isoaspartyl residues in peptides and proteins that result from spontaneous decomposition of normal L-aspartyl and L-asparaginyl residues. It plays a role in the repair and/or degradation of damaged proteins. The polypeptide is Protein-L-isoaspartate O-methyltransferase (Klebsiella pneumoniae (strain 342)).